The primary structure comprises 109 residues: Probable guanidinium efflux system subunit GdnC (109 aa).

4 consecutive transmembrane segments (helical) span residues 3–23 (WGSV…LKHA), 26–46 (ALEW…LVKA), 55–75 (VYAV…IALF), and 81–101 (IAKL…KLVT).

This sequence belongs to the drug/metabolite transporter (DMT) superfamily. Small multidrug resistance (SMR) (TC 2.A.7.1) family. YkkC/YkkD subfamily. The efflux pump is composed of GdnC and GdnD.

It localises to the cell membrane. Its function is as follows. Probably involved in guanidinium transport. The sequence is that of Probable guanidinium efflux system subunit GdnC from Bacillus licheniformis (strain ATCC 14580 / DSM 13 / JCM 2505 / CCUG 7422 / NBRC 12200 / NCIMB 9375 / NCTC 10341 / NRRL NRS-1264 / Gibson 46).